A 130-amino-acid polypeptide reads, in one-letter code: Large ribosomal subunit protein bL19 (130 aa).

The protein belongs to the bacterial ribosomal protein bL19 family.

Its function is as follows. This protein is located at the 30S-50S ribosomal subunit interface and may play a role in the structure and function of the aminoacyl-tRNA binding site. The chain is Large ribosomal subunit protein bL19 from Burkholderia vietnamiensis (strain G4 / LMG 22486) (Burkholderia cepacia (strain R1808)).